The sequence spans 485 residues: MEYKLVIGLEIHIQLGLRTKAFCGCKNEFGGVPNSRICPICLGLPGSLPSVNVELINSAILAGHATNSNIRHVVKFDRKHYYYPDLPKGYQISQNDKPICERGSLLIETSSGLKKINIIRIHMEEDSGKSLHLLDSENQSYIDFNRSGAPLLEIVSAPDISSGDEAVAFLTSLREIFRYLDLSECNMENGSFRCDVNVNLIITESGVEHKTPIAEIKNLNSFKSIKAAIEYEELRQKEEWVQFRKTLDSCGKHTRGFDDKNGVTVVQRDKETVSDYRYFQEPDLPLIEIDDFYIANIKKIKLIEFPFDARVRLKDQYGLSDFDVITLTTDKHLLRYFEEAAINASDPKKVANWILSEVLSVLNDKGISVLEFNLFPSYITELVEFIVAGKISGKMAKKVFLEMMSREVPASVIISENQLEQISDKFVIRQIVFEVLNENPKSIELYKKGKDHAIKFMMGQIMKKSSGKINPILANEILLQSLSNV.

It belongs to the GatB/GatE family. GatB subfamily. As to quaternary structure, heterotrimer of A, B and C subunits.

It catalyses the reaction L-glutamyl-tRNA(Gln) + L-glutamine + ATP + H2O = L-glutaminyl-tRNA(Gln) + L-glutamate + ADP + phosphate + H(+). It carries out the reaction L-aspartyl-tRNA(Asn) + L-glutamine + ATP + H2O = L-asparaginyl-tRNA(Asn) + L-glutamate + ADP + phosphate + 2 H(+). Its function is as follows. Allows the formation of correctly charged Asn-tRNA(Asn) or Gln-tRNA(Gln) through the transamidation of misacylated Asp-tRNA(Asn) or Glu-tRNA(Gln) in organisms which lack either or both of asparaginyl-tRNA or glutaminyl-tRNA synthetases. The reaction takes place in the presence of glutamine and ATP through an activated phospho-Asp-tRNA(Asn) or phospho-Glu-tRNA(Gln). The sequence is that of Aspartyl/glutamyl-tRNA(Asn/Gln) amidotransferase subunit B from Borrelia garinii subsp. bavariensis (strain ATCC BAA-2496 / DSM 23469 / PBi) (Borreliella bavariensis).